A 365-amino-acid chain; its full sequence is 1-acyl-sn-glycerol-3-phosphate acyltransferase epsilon (365 aa).

A helical transmembrane segment spans residues 15 to 35; that stretch reads LLPSVLLLGSAPTYLLAWTLW. Residues 93–98 carry the HXXXXD motif motif; sequence HQSTVD. The helical transmembrane segment at 345–365 threads the bilayer; the sequence is LYMGTWLYGTLLGCLWFVIKA.

Belongs to the 1-acyl-sn-glycerol-3-phosphate acyltransferase family. In terms of tissue distribution, widely expressed.

Its subcellular location is the endoplasmic reticulum membrane. The protein resides in the nucleus envelope. It is found in the mitochondrion. The enzyme catalyses a 1-acyl-sn-glycero-3-phosphate + an acyl-CoA = a 1,2-diacyl-sn-glycero-3-phosphate + CoA. The catalysed reaction is 1-(9Z-octadecenoyl)-sn-glycero-3-phosphate + tetradecanoyl-CoA = 1-(9Z)-octadecenoyl-2-tetradecanoyl-sn-glycero-3-phosphate + CoA. It catalyses the reaction pentadecanoyl-CoA + 1-(9Z-octadecenoyl)-sn-glycero-3-phosphate = 1-(9Z)-octadecenoyl-2-pentadecanoyl-sn-glycero-3-phosphate + CoA. It carries out the reaction 1-(9Z-octadecenoyl)-sn-glycero-3-phosphate + octadecanoyl-CoA = 1-(9Z-octadecenoyl)-2-octadecanoyl-sn-glycero-3-phosphate + CoA. The enzyme catalyses nonadecanoyl-CoA + 1-(9Z-octadecenoyl)-sn-glycero-3-phosphate = 1-(9Z)-octadecenoyl-2-nonadecanoyl-sn-glycero-3-phosphate + CoA. The catalysed reaction is 1-(9Z-octadecenoyl)-sn-glycero-3-phosphoethanolamine + (9Z)-octadecenoyl-CoA = 1,2-di-(9Z-octadecenoyl)-sn-glycero-3-phosphoethanolamine + CoA. It catalyses the reaction 1-(9Z-octadecenoyl)-sn-glycero-3-phosphocholine + (9Z)-octadecenoyl-CoA = 1,2-di-(9Z-octadecenoyl)-sn-glycero-3-phosphocholine + CoA. It carries out the reaction 1-(9Z-octadecenoyl)-sn-glycero-3-phospho-(1D-myo-inositol) + (5Z,8Z,11Z,14Z)-eicosatetraenoyl-CoA = 1-(9Z-octadecenoyl)-2-(5Z,8Z,11Z,14Z-eicosatetraenoyl)-sn-glycero-3-phospho-1D-myo-inositol + CoA. The enzyme catalyses 1-(9Z-octadecenoyl)-sn-glycero-3-phospho-L-serine + (9Z)-octadecenoyl-CoA = 1,2-di-(9Z)-octadecenoyl-sn-glycero-3-phospho-L-serine + CoA. The catalysed reaction is 1-(9Z-octadecenoyl)-sn-glycero-3-phospho-L-serine + (5Z,8Z,11Z,14Z)-eicosatetraenoyl-CoA = 1-(9Z-octadecenoyl)-2-(5Z,8Z,11Z,14Z-eicosatetraenoyl)-sn-glycero-3-phospho-L-serine + CoA. It catalyses the reaction 1-hexadecanoyl-sn-glycero-3-phosphate + (9Z)-octadecenoyl-CoA = 1-hexadecanoyl-2-(9Z-octadecenoyl)-sn-glycero-3-phosphate + CoA. It carries out the reaction 1-heptadecanoyl-sn-glycero-3-phosphate + (9Z)-octadecenoyl-CoA = 1-heptadecanoyl-2-(9Z)-octadecenoyl-sn-glycero-3-phosphate + CoA. The enzyme catalyses 1-(5Z,8Z,11Z,14Z-eicosatetraenoyl)-sn-glycero-3-phosphate + (9Z)-octadecenoyl-CoA = 1-(5Z,8Z,11Z,14Z)-eicosatetraenoyl-2-(9Z)-octadecenoyl-sn-glycero-3-phosphate + CoA. The catalysed reaction is 1-octadecanoyl-sn-glycero-3-phosphate + (9Z)-octadecenoyl-CoA = 1-octadecanoyl-2-(9Z-octadecenoyl)-sn-glycero-3-phosphate + CoA. It catalyses the reaction 1-(9Z-octadecenoyl)-sn-glycero-3-phosphate + (5Z,8Z,11Z,14Z)-eicosatetraenoyl-CoA = 1-(9Z)-octadecenoyl-2-(5Z,8Z,11Z,14Z)-eicosatetraenoyl-sn-glycero-3-phosphate + CoA. It carries out the reaction heptadecanoyl-CoA + 1-(9Z-octadecenoyl)-sn-glycero-3-phosphate = 1-(9Z)-octadecenoyl-2-heptadecanoyl-sn-glycero-3-phosphate + CoA. The enzyme catalyses 1-(9Z-octadecenoyl)-sn-glycero-3-phosphocholine + (5Z,8Z,11Z,14Z)-eicosatetraenoyl-CoA = 1-(9Z)-octadecenoyl-2-(5Z,8Z,11Z,14Z)-icosatetraenoyl-sn-glycero-3-phosphocholine + CoA. The catalysed reaction is 1-(9Z-octadecenoyl)-sn-glycero-3-phosphate + (9Z)-octadecenoyl-CoA = 1,2-di-(9Z-octadecenoyl)-sn-glycero-3-phosphate + CoA. It catalyses the reaction 1-(9Z-octadecenoyl)-sn-glycero-3-phosphate + hexadecanoyl-CoA = 1-hexadecanoyl-2-(9Z-octadecenoyl)-sn-glycero-3-phosphate + CoA. The protein operates within phospholipid metabolism; CDP-diacylglycerol biosynthesis; CDP-diacylglycerol from sn-glycerol 3-phosphate: step 2/3. Functionally, converts 1-acyl-sn-glycerol-3-phosphate (lysophosphatidic acid or LPA) into 1,2-diacyl-sn-glycerol-3-phosphate (phosphatidic acid or PA) by incorporating an acyl moiety at the sn-2 position of the glycerol backbone. Acts on LPA containing saturated or unsaturated fatty acids C15:0-C20:4 at the sn-1 position using C18:1-CoA as the acyl donor. Also acts on lysophosphatidylethanolamine using oleoyl-CoA, but not arachidonoyl-CoA, and lysophosphatidylinositol using arachidonoyl-CoA, but not oleoyl-CoA. Activity toward lysophosphatidylglycerol not detectable. The sequence is that of 1-acyl-sn-glycerol-3-phosphate acyltransferase epsilon (Agpat5) from Mus musculus (Mouse).